Here is a 155-residue protein sequence, read N- to C-terminus: Interleukin-2 (155 aa).

An N-terminal signal peptide occupies residues 1–20 (MYRMQLLSCIALTLALVANG). O-linked (GalNAc...) threonine glycosylation occurs at threonine 23. An intrachain disulfide couples cysteine 79 to cysteine 127.

This sequence belongs to the IL-2 family.

The protein localises to the secreted. Functionally, cytokine produced by activated CD4-positive helper T-cells and to a lesser extend activated CD8-positive T-cells and natural killer (NK) cells that plays pivotal roles in the immune response and tolerance. Binds to a receptor complex composed of either the high-affinity trimeric IL-2R (IL2RA/CD25, IL2RB/CD122 and IL2RG/CD132) or the low-affinity dimeric IL-2R (IL2RB and IL2RG). Interaction with the receptor leads to oligomerization and conformation changes in the IL-2R subunits resulting in downstream signaling starting with phosphorylation of JAK1 and JAK3. In turn, JAK1 and JAK3 phosphorylate the receptor to form a docking site leading to the phosphorylation of several substrates including STAT5. This process leads to activation of several pathways including STAT, phosphoinositide-3-kinase/PI3K and mitogen-activated protein kinase/MAPK pathways. Functions as a T-cell growth factor and can increase NK-cell cytolytic activity as well. Promotes strong proliferation of activated B-cells and subsequently immunoglobulin production. Plays a pivotal role in regulating the adaptive immune system by controlling the survival and proliferation of regulatory T-cells, which are required for the maintenance of immune tolerance. Moreover, participates in the differentiation and homeostasis of effector T-cell subsets, including Th1, Th2, Th17 as well as memory CD8-positive T-cells. This is Interleukin-2 (IL2) from Capra hircus (Goat).